We begin with the raw amino-acid sequence, 356 residues long: MWGFIVTCGIFLVLLCQLRLLSKRKSKSTPYNALLPNVTVFAMGGTIAGCANSSLEIVNYIPGSVGIEKLIEAVPAIKAIANINGVQVTNMGSENLTPADVLKLAKLILAEVAKPNVHGIVITHGTDSLEETAMFLDLTISTAKPIVVVGAMRPSTAIGADGPMNLLNAVAVASSNQSMGRGTLVLLNDRIGSAFYTTKTNGNTLDTFKSYEAGSLGIVLNQKPFYFFSPAVPTGKVFFDIYNIKQLPRVDILYGYQGLNPKLAESAVHLGAKGLVLAAMGATSWTDDGNEVISSLIREHNIPVVYSHRTAEGYSSNSCLGIPSYFLNPQKARYMLMLAISSGYSIRDIEGLFSIK.

A signal peptide spans 1–22 (MWGFIVTCGIFLVLLCQLRLLS). The Asparaginase/glutaminase domain maps to 36–356 (PNVTVFAMGG…RDIEGLFSIK (321 aa)). An N-linked (GlcNAc...) asparagine glycan is attached at N37. T46 acts as the O-isoaspartyl threonine intermediate in catalysis. The N-linked (GlcNAc...) asparagine glycan is linked to N52. Residues S93 and 126–127 (TD) contribute to the substrate site. An N-linked (GlcNAc...) asparagine glycan is attached at N176.

This sequence belongs to the asparaginase 1 family.

It is found in the secreted. Its subcellular location is the cell wall. The enzyme catalyses L-asparagine + H2O = L-aspartate + NH4(+). This chain is Probable L-asparaginase 4, found in Schizosaccharomyces pombe (strain 972 / ATCC 24843) (Fission yeast).